The chain runs to 193 residues: Orotate phosphoribosyltransferase (193 aa).

5-phospho-alpha-D-ribose 1-diphosphate is bound at residue 116–124 (EDVVTTGKS). Positions 120 and 148 each coordinate orotate.

The protein belongs to the purine/pyrimidine phosphoribosyltransferase family. PyrE subfamily. In terms of assembly, homodimer. Requires Mg(2+) as cofactor.

The catalysed reaction is orotidine 5'-phosphate + diphosphate = orotate + 5-phospho-alpha-D-ribose 1-diphosphate. It functions in the pathway pyrimidine metabolism; UMP biosynthesis via de novo pathway; UMP from orotate: step 1/2. In terms of biological role, catalyzes the transfer of a ribosyl phosphate group from 5-phosphoribose 1-diphosphate to orotate, leading to the formation of orotidine monophosphate (OMP). This is Orotate phosphoribosyltransferase from Clostridium tetani (strain Massachusetts / E88).